The sequence spans 721 residues: Polyribonucleotide nucleotidyltransferase (721 aa).

Aspartate 495 and aspartate 501 together coordinate Mg(2+). Residues 562-621 form the KH domain; the sequence is PRLLSFRIDPELIGTVIGPGGRTIKGITERTNTKIDIEDSGIVTIASHDGAAADEAQKII. The S1 motif domain maps to 631–699; it reads GEVFSGSITR…NRGRINLTLR (69 aa). A disordered region spans residues 698 to 721; the sequence is LRGVPQSGDGAGEEPQPTPVAPLS.

This sequence belongs to the polyribonucleotide nucleotidyltransferase family. Requires Mg(2+) as cofactor.

It localises to the cytoplasm. It carries out the reaction RNA(n+1) + phosphate = RNA(n) + a ribonucleoside 5'-diphosphate. In terms of biological role, involved in mRNA degradation. Catalyzes the phosphorolysis of single-stranded polyribonucleotides processively in the 3'- to 5'-direction. This chain is Polyribonucleotide nucleotidyltransferase, found in Parasynechococcus marenigrum (strain WH8102).